Here is a 234-residue protein sequence, read N- to C-terminus: Phosphoribosylaminoimidazole-succinocarboxamide synthase (234 aa).

The protein belongs to the SAICAR synthetase family.

It catalyses the reaction 5-amino-1-(5-phospho-D-ribosyl)imidazole-4-carboxylate + L-aspartate + ATP = (2S)-2-[5-amino-1-(5-phospho-beta-D-ribosyl)imidazole-4-carboxamido]succinate + ADP + phosphate + 2 H(+). It functions in the pathway purine metabolism; IMP biosynthesis via de novo pathway; 5-amino-1-(5-phospho-D-ribosyl)imidazole-4-carboxamide from 5-amino-1-(5-phospho-D-ribosyl)imidazole-4-carboxylate: step 1/2. In Streptococcus pyogenes serotype M3 (strain ATCC BAA-595 / MGAS315), this protein is Phosphoribosylaminoimidazole-succinocarboxamide synthase.